Here is a 459-residue protein sequence, read N- to C-terminus: MLLDLNRFSFPVFLKEVRLLTTLALPMLLAQVAQVGIGFVDTVMAGGAGKEDLAAVALGSSAFATVYITFMGIMAALNPMIAQLYGAGKTDEVGETGRQGIWFGLFLGVFGMVLMWAAITPFRNWLTLSDYVEGTMAQYMLFTSLAMPAAMVHRALHAYTSSLNRPRLIMLVSFAAFVLNVPLNYIFVYGKFGMPALGGAGCGLATMAVFWFSALALWIYIAKENFFRPFGLTAKFGKPDWAVFKQIWKIGAPIGLSYFLEASAFSFIVFLIAPFGEDYVAAQQVGISLSGILYMIPQSVGSAGTVRIGFSLGRREFSRARYISGVSLVLGWMLAVITVLSLVLFRSPLVSMYNNDPAVLSIAATVLLFAGLFQPADFTQCIASYALRGYKVTKVPMFIHAAAFWGCGLLPGYLLAYRFNMGIYGFWTALIASLTIAAIALVWCLELCSREMVRSHKAV.

12 helical membrane-spanning segments follow: residues 20–40, 53–73, 100–120, 132–152, 168–188, 202–222, 254–274, 286–306, 325–345, 358–378, 395–415, and 423–443; these read LTTL…IGFV, LAAV…FMGI, GIWF…AAIT, VEGT…AAMV, LIML…YIFV, CGLA…IYIA, IGLS…LIAP, GISL…AGTV, GVSL…LVLF, AVLS…PADF, VPMF…GYLL, and IYGF…ALVW.

This sequence belongs to the multi antimicrobial extrusion (MATE) (TC 2.A.66.1) family.

It localises to the cell inner membrane. Its function is as follows. Multidrug efflux pump. The protein is Probable multidrug resistance protein NorM (norM) of Neisseria meningitidis serogroup B (strain ATCC BAA-335 / MC58).